The sequence spans 218 residues: Ras-related protein Rab-4A (218 aa).

Positions 23, 24, 25, 26, 27, and 28 each coordinate GDP. Residues glycine 23, threonine 24, glycine 25, lysine 26, serine 27, cysteine 28, serine 42, histidine 44, and threonine 45 each contribute to the GTP site. Serine 27 contributes to the Mg(2+) binding site. Positions 44–49 (HTIGVE) match the Switch 1 motif. Residues threonine 45 and aspartate 68 each contribute to the Mg(2+) site. The short motif at 70–79 (AGQERFRSVT) is the Switch 2 element. Glycine 71 lines the GTP pocket. A 5-glutamyl serotonin modification is found at glutamine 72. GDP-binding residues include asparagine 126, lysine 127, aspartate 129, alanine 157, and leucine 158. Residues asparagine 126, lysine 127, aspartate 129, alanine 157, and leucine 158 each contribute to the GTP site. A Phosphoserine modification is found at serine 190. Serine 204 is subject to Phosphoserine; by CDK1. S-geranylgeranyl cysteine attachment occurs at residues cysteine 216 and cysteine 218. Cysteine 218 is subject to Cysteine methyl ester.

Belongs to the small GTPase superfamily. Rab family. In terms of assembly, interacts with SGSM1, SGSM2 and SGSM3. Interacts with RAB11FIP1, RABEP1, ZFYVE20 and RUFY1. Interacts (membrane-bound form) with NDRG1; the interaction involves NDRG1 in vesicular recycling of E-cadherin. Interacts (in GTP-bound form) with GRIPAP1 (via N-terminus). Interacts with RABEP1 and RBSN. Does not interact with HPS4. Interacts with RABEP2; this interaction may mediate VEGFR2 cell surface expression. Mg(2+) is required as a cofactor. In terms of processing, phosphorylated by CDK1 kinase during mitosis. Post-translationally, serotonylation of Gln-72 by TGM2 during activation and aggregation of platelets leads to constitutive activation of GTPase activity.

It localises to the membrane. The protein resides in the cytoplasm. It is found in the early endosome membrane. Its subcellular location is the recycling endosome membrane. The catalysed reaction is GTP + H2O = GDP + phosphate + H(+). Its activity is regulated as follows. Regulated by guanine nucleotide exchange factors (GEFs) which promote the exchange of bound GDP for free GTP. Regulated by GTPase activating proteins (GAPs) which increase the GTP hydrolysis activity. Inhibited by GDP dissociation inhibitors (GDIs). The small GTPases Rab are key regulators of intracellular membrane trafficking, from the formation of transport vesicles to their fusion with membranes. Rabs cycle between an inactive GDP-bound form and an active GTP-bound form that is able to recruit to membranes different sets of downstream effectors directly responsible for vesicle formation, movement, tethering and fusion. RAB4A is involved in protein transport. Also plays a role in vesicular traffic. Mediates VEGFR2 endosomal trafficking to enhance VEGFR2 signaling. Acts as a regulator of platelet alpha-granule release during activation and aggregation of platelets. The polypeptide is Ras-related protein Rab-4A (Homo sapiens (Human)).